We begin with the raw amino-acid sequence, 317 residues long: Melanocyte-stimulating hormone receptor (317 aa).

At 1–37 (MAVQGSQRRLLGSLNSTPTAIPQLGLAANQTGAWCLE) the chain is on the extracellular side. N29 is a glycosylation site (N-linked (GlcNAc...) asparagine). Residues 38–63 (VSIPDGLFLSLGLVSLVENVLVVATI) traverse the membrane as a helical segment. Over 64–72 (AKNRNLHSP) the chain is Cytoplasmic. The helical transmembrane segment at 73–93 (MYCFICCLALSDLLVSGGNVL) threads the bilayer. At 94–118 (ETAVILLLEAGALAARAAVVQQLDN) the chain is on the extracellular side. The chain crosses the membrane as a helical span at residues 119–140 (VIDVITCSSMLSSLCFLGAIAV). At 141 to 163 (DRYISIFYALRYHSIVTLPRARR) the chain is on the cytoplasmic side. A helical transmembrane segment spans residues 164–183 (AIAAIWVASVLFSTLFIAYY). The Extracellular segment spans residues 184 to 191 (DHAAVLLC). A helical membrane pass occupies residues 192 to 211 (LVVFFLAMLVLMAVLYVHML). Over 212-240 (ARACQHAQGIARLHKRQRPVHQGFGLKGA) the chain is Cytoplasmic. A helical membrane pass occupies residues 241–266 (VTLTILLGIFFLCWGPFFLHLTLIVL). Topologically, residues 267–279 (CPQHPTCSCIFKN) are extracellular. Residues 280–300 (FNLFLALIICNAIIDPLIYAF) form a helical membrane-spanning segment. Topologically, residues 301 to 317 (RSQELRRTLKEVLTCSW) are cytoplasmic. Residue C315 is the site of S-palmitoyl cysteine attachment.

This sequence belongs to the G-protein coupled receptor 1 family. Interacts with MGRN1, but does not undergo MGRN1-mediated ubiquitination; this interaction competes with GNAS-binding and thus inhibits agonist-induced cAMP production. Interacts with OPN3; the interaction results in a decrease in MC1R-mediated cAMP signaling and ultimately a decrease in melanin production in melanocytes.

The protein resides in the cell membrane. In terms of biological role, receptor for MSH (alpha, beta and gamma) and ACTH. The activity of this receptor is mediated by G proteins which activate adenylate cyclase. Mediates melanogenesis, the production of eumelanin (black/brown) and phaeomelanin (red/yellow), via regulation of cAMP signaling in melanocytes. The sequence is that of Melanocyte-stimulating hormone receptor (MC1R) from Pongo pygmaeus (Bornean orangutan).